The sequence spans 282 residues: MSAIDGLPPLREVIARHDLRAKKQLGQNFLLDLNLTAKIARAAGDLTGCDVIEVGPGPGGLTRGLLAEGARHVLAIEKDARALPALAEIATAYPGRLEVIHGDALEIDPLAHLTPPIRIVANLPYNVGTELLIRWLTPAAWPPFWQSLTLMFQKEVAERIVAQPGGKAYGRLAVLAQWRTEARIVMTLPPEAFVPAPKVHSAVVHLTALPGPRYPADPAVLNRVVAAGFNQRRKMLRASLKGLHPEIEALLIQAGIAPTARAEEIGLEQFCALARGLAAAPR.

Positions 28, 30, 55, 77, 103, and 122 each coordinate S-adenosyl-L-methionine.

The protein belongs to the class I-like SAM-binding methyltransferase superfamily. rRNA adenine N(6)-methyltransferase family. RsmA subfamily.

The protein resides in the cytoplasm. It catalyses the reaction adenosine(1518)/adenosine(1519) in 16S rRNA + 4 S-adenosyl-L-methionine = N(6)-dimethyladenosine(1518)/N(6)-dimethyladenosine(1519) in 16S rRNA + 4 S-adenosyl-L-homocysteine + 4 H(+). Functionally, specifically dimethylates two adjacent adenosines (A1518 and A1519) in the loop of a conserved hairpin near the 3'-end of 16S rRNA in the 30S particle. May play a critical role in biogenesis of 30S subunits. The polypeptide is Ribosomal RNA small subunit methyltransferase A (Paracoccus denitrificans (strain Pd 1222)).